The following is a 430-amino-acid chain: Delta(14)-sterol reductase (430 aa).

6 helical membrane passes run 12 to 32 (IGTG…HFLI), 67 to 87 (LAVA…PAEI), 109 to 129 (FLVF…TWWF), 230 to 250 (FVSD…VDAL), 267 to 287 (LGVM…CLQA), and 290 to 310 (LASF…AVQF). NADP(+) is bound by residues lysine 323, arginine 327, leucine 350, tryptophan 355, and 362–363 (NY). A run of 2 helical transmembrane segments spans residues 349-369 (LLIS…DWIM) and 376-396 (TTGF…ILLL). Residues aspartate 402, 406–410 (CREKY), and tyrosine 417 each bind NADP(+).

Belongs to the ERG4/ERG24 family.

It is found in the membrane. The enzyme catalyses 4,4-dimethyl-5alpha-cholesta-8,24-dien-3beta-ol + NADP(+) = 4,4-dimethyl-5alpha-cholesta-8,14,24-trien-3beta-ol + NADPH + H(+). Its pathway is steroid biosynthesis; zymosterol biosynthesis; zymosterol from lanosterol: step 2/6. Functionally, reduces the C14=C15 double bond of 4,4-dimethyl-cholesta-8,14,24-trienol to produce 4,4-dimethyl-cholesta-8,24-dienol. The protein is Delta(14)-sterol reductase (ERG3) of Ascobolus immersus.